The primary structure comprises 351 residues: Alanine racemase (351 aa).

The active-site Proton acceptor; specific for D-alanine is the lysine 34. An N6-(pyridoxal phosphate)lysine modification is found at lysine 34. Residue arginine 126 coordinates substrate. Tyrosine 248 acts as the Proton acceptor; specific for L-alanine in catalysis. Residue methionine 296 coordinates substrate.

Belongs to the alanine racemase family. The cofactor is pyridoxal 5'-phosphate.

It carries out the reaction L-alanine = D-alanine. It functions in the pathway amino-acid biosynthesis; D-alanine biosynthesis; D-alanine from L-alanine: step 1/1. Functionally, catalyzes the interconversion of L-alanine and D-alanine. May also act on other amino acids. This chain is Alanine racemase (alr), found in Deinococcus radiodurans (strain ATCC 13939 / DSM 20539 / JCM 16871 / CCUG 27074 / LMG 4051 / NBRC 15346 / NCIMB 9279 / VKM B-1422 / R1).